A 71-amino-acid polypeptide reads, in one-letter code: Large ribosomal subunit protein uL29 (71 aa).

This sequence belongs to the universal ribosomal protein uL29 family.

The polypeptide is Large ribosomal subunit protein uL29 (Roseiflexus sp. (strain RS-1)).